The following is a 97-amino-acid chain: NADH-quinone oxidoreductase subunit K (97 aa).

The next 3 membrane-spanning stretches (helical) occupy residues 1-21, 25-45, and 57-77; these read MSEY…GVLY, ILVM…LMVY, and VFVF…LAIL.

This sequence belongs to the complex I subunit 4L family. In terms of assembly, NDH-1 is composed of 14 different subunits. Subunits NuoA, H, J, K, L, M, N constitute the membrane sector of the complex.

Its subcellular location is the cell inner membrane. The enzyme catalyses a quinone + NADH + 5 H(+)(in) = a quinol + NAD(+) + 4 H(+)(out). Functionally, NDH-1 shuttles electrons from NADH, via FMN and iron-sulfur (Fe-S) centers, to quinones in the respiratory chain. The immediate electron acceptor for the enzyme in this species is believed to be a menaquinone. Couples the redox reaction to proton translocation (for every two electrons transferred, four hydrogen ions are translocated across the cytoplasmic membrane), and thus conserves the redox energy in a proton gradient. The chain is NADH-quinone oxidoreductase subunit K from Cytophaga hutchinsonii (strain ATCC 33406 / DSM 1761 / CIP 103989 / NBRC 15051 / NCIMB 9469 / D465).